The chain runs to 558 residues: EF-hand and coiled-coil domain-containing protein 1 (558 aa).

In terms of domain architecture, EF-hand spans 43 to 78 (GLDQYLQEVFHHLDCRGAGRLPRADFRALCAVLGLN). Residues 161–170 (LRRPRRRRRP) are compositionally biased toward basic residues. Disordered stretches follow at residues 161-183 (LRRP…YGER) and 304-395 (RSEG…QPSG). Coiled coils occupy residues 179–304 (AYGE…RGYR) and 453–495 (VEAE…LNIS).

The polypeptide is EF-hand and coiled-coil domain-containing protein 1 (Efcc1) (Mus musculus (Mouse)).